Consider the following 427-residue polypeptide: Trigger factor (427 aa).

The 86-residue stretch at 165–250 (GDTVVIDFEG…LHEIQEQVPA (86 aa)) folds into the PPIase FKBP-type domain.

The protein belongs to the FKBP-type PPIase family. Tig subfamily.

The protein resides in the cytoplasm. The catalysed reaction is [protein]-peptidylproline (omega=180) = [protein]-peptidylproline (omega=0). Its function is as follows. Involved in protein export. Acts as a chaperone by maintaining the newly synthesized protein in an open conformation. Functions as a peptidyl-prolyl cis-trans isomerase. This chain is Trigger factor, found in Sulfurovum sp. (strain NBC37-1).